Consider the following 293-residue polypeptide: tRNA pseudouridine synthase B (293 aa).

Asp38 functions as the Nucleophile in the catalytic mechanism.

The protein belongs to the pseudouridine synthase TruB family. Type 1 subfamily.

It catalyses the reaction uridine(55) in tRNA = pseudouridine(55) in tRNA. In terms of biological role, responsible for synthesis of pseudouridine from uracil-55 in the psi GC loop of transfer RNAs. In Microcystis aeruginosa (strain NIES-843 / IAM M-2473), this protein is tRNA pseudouridine synthase B.